Consider the following 302-residue polypeptide: Recombination-associated protein RdgC (302 aa).

Belongs to the RdgC family.

The protein resides in the cytoplasm. The protein localises to the nucleoid. May be involved in recombination. This is Recombination-associated protein RdgC from Xylella fastidiosa (strain M23).